The following is a 320-amino-acid chain: MARNKIALIGSGMIGGTLAHIAAREELGDVVLFDIAEGVAKGKALDIAEASPVFGKDSKLAGADDYAAIAGADVCIVTAGVPRKPGMSRDDLLGINLKVMKAVGEGIAKHAPDAFVICITNPLDAMVWALREFSGLPHNKVVGMAGVLDSARFRHFLADEFEVSVEDVTAFVMGGHGDTMVPLLRYSTIAGIPVPDMVKMGWSTDEKMDAIIDRTRKGGGEIVALLGTGSAFYAPAESAIDMAVSYLRDKKRILPCAAYLSGQFGQDDLYVGVPVVIGAGGVEKIVEIELNADEQTMFNNSVDSVKGLVSACKGLDPSLG.

NAD(+)-binding positions include 10–15 and Asp34; that span reads GSGMIG. Residues Arg83 and Arg89 each coordinate substrate. NAD(+)-binding positions include Asn96 and 119–121; that span reads ITN. Asn121 and Arg152 together coordinate substrate. His176 serves as the catalytic Proton acceptor.

This sequence belongs to the LDH/MDH superfamily. MDH type 3 family.

The enzyme catalyses (S)-malate + NAD(+) = oxaloacetate + NADH + H(+). Functionally, catalyzes the reversible oxidation of malate to oxaloacetate. In Maricaulis maris (strain MCS10) (Caulobacter maris), this protein is Malate dehydrogenase.